The chain runs to 717 residues: DNA ligase (717 aa).

Residues 41-45 (DARYD), 90-91 (SL), and Glu124 each bind NAD(+). Lys126 serves as the catalytic N6-AMP-lysine intermediate. Residues Arg147, Glu183, Lys299, and Lys323 each coordinate NAD(+). Zn(2+) contacts are provided by Cys428, Cys431, Cys446, and Cys452. A BRCT domain is found at 636–717 (ADYSPVAGKT…WLQLINEHHI (82 aa)).

Belongs to the NAD-dependent DNA ligase family. LigA subfamily. Requires Mg(2+) as cofactor. The cofactor is Mn(2+).

The enzyme catalyses NAD(+) + (deoxyribonucleotide)n-3'-hydroxyl + 5'-phospho-(deoxyribonucleotide)m = (deoxyribonucleotide)n+m + AMP + beta-nicotinamide D-nucleotide.. DNA ligase that catalyzes the formation of phosphodiester linkages between 5'-phosphoryl and 3'-hydroxyl groups in double-stranded DNA using NAD as a coenzyme and as the energy source for the reaction. It is essential for DNA replication and repair of damaged DNA. The sequence is that of DNA ligase from Bartonella bacilliformis (strain ATCC 35685 / KC583 / Herrer 020/F12,63).